Here is a 234-residue protein sequence, read N- to C-terminus: Sugar fermentation stimulation protein homolog (234 aa).

This sequence belongs to the SfsA family.

The sequence is that of Sugar fermentation stimulation protein homolog from Shewanella sp. (strain MR-7).